The chain runs to 182 residues: Crossover junction endodeoxyribonuclease RuvC (182 aa).

Catalysis depends on residues aspartate 7, glutamate 69, and aspartate 141. Mg(2+)-binding residues include aspartate 7, glutamate 69, and aspartate 141.

This sequence belongs to the RuvC family. In terms of assembly, homodimer which binds Holliday junction (HJ) DNA. The HJ becomes 2-fold symmetrical on binding to RuvC with unstacked arms; it has a different conformation from HJ DNA in complex with RuvA. In the full resolvosome a probable DNA-RuvA(4)-RuvB(12)-RuvC(2) complex forms which resolves the HJ. Mg(2+) is required as a cofactor.

Its subcellular location is the cytoplasm. The catalysed reaction is Endonucleolytic cleavage at a junction such as a reciprocal single-stranded crossover between two homologous DNA duplexes (Holliday junction).. The RuvA-RuvB-RuvC complex processes Holliday junction (HJ) DNA during genetic recombination and DNA repair. Endonuclease that resolves HJ intermediates. Cleaves cruciform DNA by making single-stranded nicks across the HJ at symmetrical positions within the homologous arms, yielding a 5'-phosphate and a 3'-hydroxyl group; requires a central core of homology in the junction. The consensus cleavage sequence is 5'-(A/T)TT(C/G)-3'. Cleavage occurs on the 3'-side of the TT dinucleotide at the point of strand exchange. HJ branch migration catalyzed by RuvA-RuvB allows RuvC to scan DNA until it finds its consensus sequence, where it cleaves and resolves the cruciform DNA. The polypeptide is Crossover junction endodeoxyribonuclease RuvC (Delftia acidovorans (strain DSM 14801 / SPH-1)).